The following is a 294-amino-acid chain: Homoserine kinase (294 aa).

83-93 lines the ATP pocket; that stretch reads RPKSGLGSSGA.

Belongs to the GHMP kinase family. Homoserine kinase subfamily.

It is found in the cytoplasm. The catalysed reaction is L-homoserine + ATP = O-phospho-L-homoserine + ADP + H(+). Its pathway is amino-acid biosynthesis; L-threonine biosynthesis; L-threonine from L-aspartate: step 4/5. In terms of biological role, catalyzes the ATP-dependent phosphorylation of L-homoserine to L-homoserine phosphate. The chain is Homoserine kinase from Pyrococcus abyssi (strain GE5 / Orsay).